Here is a 183-residue protein sequence, read N- to C-terminus: Protein Syd (183 aa).

This sequence belongs to the Syd family.

The protein resides in the cell inner membrane. Functionally, interacts with the SecY protein in vivo. May bind preferentially to an uncomplexed state of SecY, thus functioning either as a chelating agent for excess SecY in the cell or as a regulatory factor that negatively controls the translocase function. The chain is Protein Syd from Idiomarina loihiensis (strain ATCC BAA-735 / DSM 15497 / L2-TR).